A 94-amino-acid polypeptide reads, in one-letter code: Co-chaperonin GroES (94 aa).

The protein belongs to the GroES chaperonin family. Heptamer of 7 subunits arranged in a ring. Interacts with the chaperonin GroEL.

Its subcellular location is the cytoplasm. Functionally, together with the chaperonin GroEL, plays an essential role in assisting protein folding. The GroEL-GroES system forms a nano-cage that allows encapsulation of the non-native substrate proteins and provides a physical environment optimized to promote and accelerate protein folding. GroES binds to the apical surface of the GroEL ring, thereby capping the opening of the GroEL channel. This chain is Co-chaperonin GroES, found in Clostridioides difficile (Peptoclostridium difficile).